A 300-amino-acid polypeptide reads, in one-letter code: Protein XRI1 (300 aa).

In terms of assembly, interacts (via C-terminal domain) with MIP1.

Its subcellular location is the nucleus. Required for mitotic division of the generative cell nucleus and the development of mature tricellular pollen grains, and for male and female meiosis. This Arabidopsis thaliana (Mouse-ear cress) protein is Protein XRI1 (XRI1).